The following is a 92-amino-acid chain: Large ribosomal subunit protein eL43 (92 aa).

Residues Cys39, Cys42, Cys57, and Cys60 each contribute to the Zn(2+) site. The C4-type zinc-finger motif lies at 39–60 (CPNCGEDRVDRQGTGIWQCSYC).

It belongs to the eukaryotic ribosomal protein eL43 family. Putative zinc-binding subfamily. Part of the 50S ribosomal subunit. Contacts protein L2. Requires Zn(2+) as cofactor.

Functionally, binds to the 23S rRNA. The sequence is that of Large ribosomal subunit protein eL43 from Haloarcula marismortui (strain ATCC 43049 / DSM 3752 / JCM 8966 / VKM B-1809) (Halobacterium marismortui).